Consider the following 365-residue polypeptide: Chorismate synthase (365 aa).

NADP(+) contacts are provided by Arg48 and Arg54. Residues 129 to 131 (RSS), 241 to 242 (NA), Gly285, 300 to 304 (KPTSS), and Arg326 contribute to the FMN site.

It belongs to the chorismate synthase family. As to quaternary structure, homotetramer. It depends on FMNH2 as a cofactor.

The enzyme catalyses 5-O-(1-carboxyvinyl)-3-phosphoshikimate = chorismate + phosphate. It participates in metabolic intermediate biosynthesis; chorismate biosynthesis; chorismate from D-erythrose 4-phosphate and phosphoenolpyruvate: step 7/7. Its function is as follows. Catalyzes the anti-1,4-elimination of the C-3 phosphate and the C-6 proR hydrogen from 5-enolpyruvylshikimate-3-phosphate (EPSP) to yield chorismate, which is the branch point compound that serves as the starting substrate for the three terminal pathways of aromatic amino acid biosynthesis. This reaction introduces a second double bond into the aromatic ring system. The polypeptide is Chorismate synthase (Parvibaculum lavamentivorans (strain DS-1 / DSM 13023 / NCIMB 13966)).